Consider the following 148-residue polypeptide: Lysozyme C (148 aa).

An N-terminal signal peptide occupies residues M1–G18. The C-type lysozyme domain occupies K19 to V148. Cystine bridges form between C24/C146, C48/C134, C83/C99, and C95/C113. Active-site residues include E53 and D71.

It belongs to the glycosyl hydrolase 22 family. In terms of assembly, monomer.

It is found in the secreted. It carries out the reaction Hydrolysis of (1-&gt;4)-beta-linkages between N-acetylmuramic acid and N-acetyl-D-glucosamine residues in a peptidoglycan and between N-acetyl-D-glucosamine residues in chitodextrins.. Functionally, lysozymes have primarily a bacteriolytic function; those in tissues and body fluids are associated with the monocyte-macrophage system and enhance the activity of immunoagents. Also plays a role in digestion in this species. This Semnopithecus entellus (Northern plains gray langur) protein is Lysozyme C (LYZ).